A 328-amino-acid polypeptide reads, in one-letter code: D-cysteine desulfhydrase (328 aa).

Residue K51 is modified to N6-(pyridoxal phosphate)lysine.

The protein belongs to the ACC deaminase/D-cysteine desulfhydrase family. Homodimer. Requires pyridoxal 5'-phosphate as cofactor.

It catalyses the reaction D-cysteine + H2O = hydrogen sulfide + pyruvate + NH4(+) + H(+). Its function is as follows. Catalyzes the alpha,beta-elimination reaction of D-cysteine and of several D-cysteine derivatives. It could be a defense mechanism against D-cysteine. In Klebsiella pneumoniae subsp. pneumoniae (strain ATCC 700721 / MGH 78578), this protein is D-cysteine desulfhydrase.